We begin with the raw amino-acid sequence, 152 residues long: Large ribosomal subunit protein uL13 (152 aa).

The disordered stretch occupies residues 129 to 152; the sequence is EHPHEAQSPEVLDVKSMNKKNTRS.

It belongs to the universal ribosomal protein uL13 family. In terms of assembly, part of the 50S ribosomal subunit.

In terms of biological role, this protein is one of the early assembly proteins of the 50S ribosomal subunit, although it is not seen to bind rRNA by itself. It is important during the early stages of 50S assembly. The protein is Large ribosomal subunit protein uL13 of Ruegeria sp. (strain TM1040) (Silicibacter sp.).